Consider the following 85-residue polypeptide: Sodium channel neurotoxin MeuNaTxalpha-1 (85 aa).

An N-terminal signal peptide occupies residues 1 to 19 (MNSLVMISLALLVMTGVES). One can recognise an LCN-type CS-alpha/beta domain in the interval 21 to 83 (RDGYIADDKN…VPIKVSGKCN (63 aa)). Residues 27–31 (DDKNC) form a specificity module, loop 1 region. Intrachain disulfides connect Cys-31–Cys-82, Cys-35–Cys-55, Cys-41–Cys-65, and Cys-45–Cys-67. Specificity module, loop stretches follow at residues 58–62 (AGQYG) and 75–83 (PIKVSGKCN). Asn-83 bears the Asparagine amide mark.

The protein belongs to the long (4 C-C) scorpion toxin superfamily. Sodium channel inhibitor family. Alpha subfamily. In terms of processing, C-terminal amidation does not appear to play an important role in activity, since the non-amidated recombinant toxin and the native toxin (which is amidated) show similar activities on all sodium channels tested. In terms of tissue distribution, expressed by the venom gland.

The protein resides in the secreted. Alpha toxins bind voltage-independently at site-3 of sodium channels (Nav) and inhibit the inactivation of the activated channels, thereby blocking neuronal transmission. This toxin inhibits inactivation of Nav1.6/SCN8A (EC(50)=3.1 uM) and drosophila DmNav1 (EC(50)=1.17 uM). It also shows a weak inhibition of inactivation on Nav1.2/SCN2A Nav1.3/SCN3A, and Nav1.7/SCN9A. The toxin (1 uM) does not significantly shift the midpoint of activation at the two channels, but induces a significant depolarizing shift in the V(1/2) of inactivation of the channels. The toxin has also been shown to dose-dependently stimulates intracellular signaling in DRG neurons through activation of two kinases (type II protein kinase A (PKA-II) and MAP kinases 1/3 (MAPK1/MAPK3)). Nav1.2/SCN2A is strongly suggested to be the target channel predominantly involved in this activation. In vivo, the toxin induces a dose-dependent thermal hyperalgesia lasting 30-45 minutes. The sequence is that of Sodium channel neurotoxin MeuNaTxalpha-1 from Mesobuthus eupeus (Lesser Asian scorpion).